The sequence spans 396 residues: MSEHNIRNFSINFGPQHPAAHGVLRLVLELDGEVVERVDPHIGLLHRGTEKLIEHKTYLQATPYFDRLDYVSPMNQEHAFCLAIERLAGIEVPRRAQLIRTLFCEIGRLLSHLLNVTTQAMDVGALTPPLWGFEEREKLMIFYERASGARLHANYFRPGGVHQDLPPALIDDIEAFCDPFLKVVDDLDNLVMANRIFKQRNVDIGIVSVDEAMAWGFSGVMVRGSGIPWDLRKSQPYECYEEMDFDIPVGKNGDTYDRQVIRMEEMRESVKIMRQCCAKLREPSGQGPIASIDGKFAPPPRREMKRSMEALIHHFKLYTEGFHVPEGEVYAAVEAPKGEFGVYLVSDGTNKPYRCKIRAPGFAHLQAMDWMCRGHLLADVSCVLGTLDIVFGEVDR.

Belongs to the complex I 49 kDa subunit family. As to quaternary structure, NDH-1 is composed of 14 different subunits. Subunits NuoB, C, D, E, F, and G constitute the peripheral sector of the complex.

It is found in the cell inner membrane. The enzyme catalyses a quinone + NADH + 5 H(+)(in) = a quinol + NAD(+) + 4 H(+)(out). NDH-1 shuttles electrons from NADH, via FMN and iron-sulfur (Fe-S) centers, to quinones in the respiratory chain. The immediate electron acceptor for the enzyme in this species is believed to be ubiquinone. Couples the redox reaction to proton translocation (for every two electrons transferred, four hydrogen ions are translocated across the cytoplasmic membrane), and thus conserves the redox energy in a proton gradient. This is NADH-quinone oxidoreductase subunit D from Methylorubrum populi (strain ATCC BAA-705 / NCIMB 13946 / BJ001) (Methylobacterium populi).